Reading from the N-terminus, the 86-residue chain is Small ribosomal subunit protein uS15 (86 aa).

Polar residues predominate over residues 1-10 (MSIDTQSIIE). The tract at residues 1–21 (MSIDTQSIIENNKRSAHDTGS) is disordered.

This sequence belongs to the universal ribosomal protein uS15 family. Part of the 30S ribosomal subunit. Forms a bridge to the 50S subunit in the 70S ribosome, contacting the 23S rRNA.

Its function is as follows. One of the primary rRNA binding proteins, it binds directly to 16S rRNA where it helps nucleate assembly of the platform of the 30S subunit by binding and bridging several RNA helices of the 16S rRNA. In terms of biological role, forms an intersubunit bridge (bridge B4) with the 23S rRNA of the 50S subunit in the ribosome. The sequence is that of Small ribosomal subunit protein uS15 from Xylella fastidiosa (strain 9a5c).